Reading from the N-terminus, the 330-residue chain is Beta-ketoacyl-[acyl-carrier-protein] synthase III (330 aa).

Residues C115 and H255 contribute to the active site. The ACP-binding stretch occupies residues 256–260 (QANVR). Residue N285 is part of the active site.

The protein belongs to the thiolase-like superfamily. FabH family. As to quaternary structure, homodimer.

It is found in the cytoplasm. It catalyses the reaction malonyl-[ACP] + acetyl-CoA + H(+) = 3-oxobutanoyl-[ACP] + CO2 + CoA. The protein operates within lipid metabolism; fatty acid biosynthesis. Its function is as follows. Catalyzes the condensation reaction of fatty acid synthesis by the addition to an acyl acceptor of two carbons from malonyl-ACP. Catalyzes the first condensation reaction which initiates fatty acid synthesis and may therefore play a role in governing the total rate of fatty acid production. Possesses both acetoacetyl-ACP synthase and acetyl transacylase activities. Its substrate specificity determines the biosynthesis of branched-chain and/or straight-chain of fatty acids. This is Beta-ketoacyl-[acyl-carrier-protein] synthase III from Symbiobacterium thermophilum (strain DSM 24528 / JCM 14929 / IAM 14863 / T).